Reading from the N-terminus, the 475-residue chain is uncharacterized protein (475 aa).

Residues 19–39 form a helical membrane-spanning segment; the sequence is IKVGVFFVAILLILTGILLTI. Disordered regions lie at residues 55–79 and 330–350; these read GEYH…NATS and SSPF…PHKG. A compositionally biased stretch (polar residues) spans 60 to 79; sequence LNTSPNENSTALQPDENATS. Residues 336 to 348 show a composition bias toward basic residues; sequence NRRHPVTGRIRPH. H348 provides a ligand contact to Zn(2+).

It in the central section; belongs to the OapA family. In the C-terminal section; belongs to the peptidase M23B family. Zn(2+) serves as cofactor.

Its subcellular location is the cell membrane. This is an uncharacterized protein from Haemophilus influenzae (strain ATCC 51907 / DSM 11121 / KW20 / Rd).